The chain runs to 698 residues: Long-chain-fatty-acid--CoA ligase 1 (698 aa).

Residue Met-1 is modified to N-acetylmethionine. The residue at position 9 (Tyr-9) is a 3'-nitrotyrosine. Tyr-84 is modified (phosphotyrosine). O-linked (GlcNAc) serine glycosylation is present at Ser-135. Residues Lys-356 and Lys-386 each carry the N6-acetyllysine modification. Ser-620 carries the phosphoserine modification. Position 632 is an N6-acetyllysine (Lys-632).

This sequence belongs to the ATP-dependent AMP-binding enzyme family. Requires Mg(2+) as cofactor.

The protein resides in the microsome membrane. It is found in the mitochondrion outer membrane. It localises to the peroxisome membrane. The protein localises to the endoplasmic reticulum membrane. It carries out the reaction a long-chain fatty acid + ATP + CoA = a long-chain fatty acyl-CoA + AMP + diphosphate. The catalysed reaction is (5Z,8Z,11Z,14Z)-eicosatetraenoate + ATP + CoA = (5Z,8Z,11Z,14Z)-eicosatetraenoyl-CoA + AMP + diphosphate. The enzyme catalyses 3,7,11,15-tetramethylhexadecanoate + ATP + CoA = phytanoyl-CoA + AMP + diphosphate. It catalyses the reaction hexadecanoate + ATP + CoA = hexadecanoyl-CoA + AMP + diphosphate. It carries out the reaction (E)-hexadec-2-enoate + ATP + CoA = (2E)-hexadecenoyl-CoA + AMP + diphosphate. The catalysed reaction is 2,6,10,14-tetramethylpentadecanoate + ATP + CoA = pristanoyl-CoA + AMP + diphosphate. The enzyme catalyses 14,15-epoxy-(5Z,8Z,11Z)-eicosatrienoate + ATP + CoA = 14,15-epoxy-(5Z,8Z,11Z)-eicosatrienoyl-CoA + AMP + diphosphate. It catalyses the reaction 5-hydroxy-(6E,8Z,11Z,14Z)-eicosatetraenoate + ATP + CoA = 5-hydroxy-(6E,8Z,11Z,14Z)-eicosatetraenoyl-CoA + AMP + diphosphate. It carries out the reaction 12-hydroxy-(5Z,8Z,10E,14Z)-eicosatetraenoate + ATP + CoA = 12-hydroxy-(5Z,8Z,10E,14Z)-eicosatetraenoyl-CoA + AMP + diphosphate. The catalysed reaction is 15-hydroxy-(5Z,8Z,11Z,13E)-eicosatetraenoate + ATP + CoA = 15-hydroxy-(5Z,8Z,11Z,13E)-eicosatetraenoyl-CoA + AMP + diphosphate. The enzyme catalyses (9Z)-octadecenoate + ATP + CoA = (9Z)-octadecenoyl-CoA + AMP + diphosphate. With respect to regulation, inhibited at high temperature and by arachidonate. Catalyzes the conversion of long-chain fatty acids to their active form acyl-CoAs for both synthesis of cellular lipids, and degradation via beta-oxidation. Preferentially uses palmitoleate, oleate and linoleate. Preferentially activates arachidonate than epoxyeicosatrienoic acids (EETs) or hydroxyeicosatrienoic acids (HETEs). The chain is Long-chain-fatty-acid--CoA ligase 1 from Cavia porcellus (Guinea pig).